We begin with the raw amino-acid sequence, 260 residues long: Small ribosomal subunit protein uS2 (260 aa).

Belongs to the universal ribosomal protein uS2 family.

The sequence is that of Small ribosomal subunit protein uS2 from Streptococcus gordonii (strain Challis / ATCC 35105 / BCRC 15272 / CH1 / DL1 / V288).